The sequence spans 621 residues: GPI-anchor transamidase component GPAA1 (621 aa).

Residues 2-19 (GLLSDPVRRRALARLVLR) are Cytoplasmic-facing. A helical transmembrane segment spans residues 20-41 (LNAPLCVLSYVAGIAWFLALVF). The Lumenal portion of the chain corresponds to 42 to 370 (PPLTQRTYMS…LLPGLSRFVS (329 aa)). A 2-acyl-6-[6-phosphoethanolamine-alpha-D-mannosyl-(1-&gt;2)-6-phosphoethanolamine-alpha-D-mannosyl-(1-&gt;6)-2-phosphoethanolamine-alpha-D-mannosyl-(1-&gt;4)-alpha-D-glucosaminyl]-1-(1-radyl,2-acyl-sn-glycero-3-phospho)-1D-myo-inositol contacts are provided by tyrosine 49 and serine 51. The N-linked (GlcNAc...) asparagine glycan is linked to asparagine 203. A disulfide bridge connects residues cysteine 259 and cysteine 266. The a 2-acyl-6-[6-phosphoethanolamine-alpha-D-mannosyl-(1-&gt;2)-6-phosphoethanolamine-alpha-D-mannosyl-(1-&gt;6)-2-phosphoethanolamine-alpha-D-mannosyl-(1-&gt;4)-alpha-D-glucosaminyl]-1-(1-radyl,2-acyl-sn-glycero-3-phospho)-1D-myo-inositol site is built by histidine 354, glutamine 355, and serine 356. Glutamine 355 provides a ligand contact to Mg(2+). Residues 371–393 (IGLYMPAVGFLLLVLGLKALELW) traverse the membrane as a helical segment. The Cytoplasmic portion of the chain corresponds to 394 to 425 (MQLHEAGMGLEEPGGAPGPSVPLPPSQGVGLA). Residues 426 to 450 (SLVAPLLISQAMGLALYVLPVLGQH) traverse the membrane as a helical segment. At 451 to 462 (VATQHFPVAEAE) the chain is on the lumenal side. A helical transmembrane segment spans residues 463–483 (AVVLTLLAIYAAGLALPHNTH). At 484–495 (RVVSTQAPDRGW) the chain is on the cytoplasmic side. 2 helical membrane passes run 496 to 519 (MALKLVALIYLALQLGCIALTNFS) and 520 to 536 (LGFLLATTMVPTAALAK). Residues 537-540 (PHGP) are Cytoplasmic-facing. A helical membrane pass occupies residues 541-563 (RTLYAALLVLTSPAATLLGSLFL). Residues 564 to 597 (WRELQEAPLSLAEGWQLFLAALAQGVLEHHTYGA) lie on the Lumenal side of the membrane. A helical membrane pass occupies residues 598 to 619 (LLFPLLSLGLYPCWLLFWNVLF). At 620–621 (WK) the chain is on the cytoplasmic side.

In terms of assembly, heteropentamer. Part of the GPI-anchor transamidase complex, consisting of PIGK, PIGT, PIGS, PIGU and GAA1. Interacts with PIGK. As to expression, ubiquitously expressed in fetal and adult tissues. Expressed at higher levels in fetal tissues than adult tissues.

It localises to the endoplasmic reticulum membrane. It participates in glycolipid biosynthesis; glycosylphosphatidylinositol-anchor biosynthesis. Functionally, component of the glycosylphosphatidylinositol-anchor (GPI-anchor) transamidase (GPI-T) complex that catalyzes the formation of the linkage between a proprotein and a GPI-anchor and participates in GPI anchored protein biosynthesis. Binds GPI-anchor. In Homo sapiens (Human), this protein is GPI-anchor transamidase component GPAA1.